We begin with the raw amino-acid sequence, 248 residues long: Triosephosphate isomerase (248 aa).

Substrate-binding residues include N11 and K13. H95 acts as the Electrophile in catalysis. E165 (proton acceptor) is an active-site residue.

The protein belongs to the triosephosphate isomerase family. Homodimer.

Its subcellular location is the cytoplasm. The catalysed reaction is D-glyceraldehyde 3-phosphate = dihydroxyacetone phosphate. It catalyses the reaction dihydroxyacetone phosphate = methylglyoxal + phosphate. It functions in the pathway carbohydrate degradation; glycolysis; D-glyceraldehyde 3-phosphate from glycerone phosphate: step 1/1. The protein operates within carbohydrate biosynthesis; gluconeogenesis. Its function is as follows. Triosephosphate isomerase is an extremely efficient metabolic enzyme that catalyzes the interconversion between dihydroxyacetone phosphate (DHAP) and D-glyceraldehyde-3-phosphate (G3P) in glycolysis and gluconeogenesis. In terms of biological role, it is also responsible for the non-negligible production of methylglyoxal a reactive cytotoxic side-product that modifies and can alter proteins, DNA and lipids. This Oryzias latipes (Japanese rice fish) protein is Triosephosphate isomerase (tpi1).